The following is a 592-amino-acid chain: Inactive heparanase-2 (592 aa).

The N-terminal stretch at 1–41 (MRVLCAFPEAMPSSNSRPPACLAPGALYLALLLHLSLSSQA) is a signal peptide. N-linked (GlcNAc...) asparagine glycans are attached at residues Asn254 and Asn392.

It belongs to the glycosyl hydrolase 79 family. Interacts with HPSE. Interacts with SDC1 (via glycan chains). As to expression, widely expressed, with the highest expression in brain, mammary gland, prostate, small intestine, testis and uterus. In the central nervous system, expressed in the spinal cord, caudate nucleus, thalamus, substantia nigra, medulla oblongata, putamen and pons. In the urinary bladder, expressed in longitudinal and circular layers of detrusor muscle. Found both in normal and cancer tissues.

It is found in the secreted. The protein localises to the extracellular space. The protein resides in the extracellular matrix. Binds heparin and heparan sulfate with high affinity, but lacks heparanase activity. Inhibits HPSE, possibly by competing for its substrates (in vitro). The sequence is that of Inactive heparanase-2 (HPSE2) from Homo sapiens (Human).